The sequence spans 257 residues: 1-(5-phosphoribosyl)-5-[(5-phosphoribosylamino)methylideneamino] imidazole-4-carboxamide isomerase (257 aa).

Asp-8 acts as the Proton acceptor in catalysis. Asp-129 functions as the Proton donor in the catalytic mechanism.

The protein belongs to the HisA/HisF family.

Its subcellular location is the cytoplasm. The catalysed reaction is 1-(5-phospho-beta-D-ribosyl)-5-[(5-phospho-beta-D-ribosylamino)methylideneamino]imidazole-4-carboxamide = 5-[(5-phospho-1-deoxy-D-ribulos-1-ylimino)methylamino]-1-(5-phospho-beta-D-ribosyl)imidazole-4-carboxamide. Its pathway is amino-acid biosynthesis; L-histidine biosynthesis; L-histidine from 5-phospho-alpha-D-ribose 1-diphosphate: step 4/9. This is 1-(5-phosphoribosyl)-5-[(5-phosphoribosylamino)methylideneamino] imidazole-4-carboxamide isomerase from Rippkaea orientalis (strain PCC 8801 / RF-1) (Cyanothece sp. (strain PCC 8801)).